A 338-amino-acid polypeptide reads, in one-letter code: Heat-inducible transcription repressor HrcA (338 aa).

It belongs to the HrcA family.

Negative regulator of class I heat shock genes (grpE-dnaK-dnaJ and groELS operons). Prevents heat-shock induction of these operons. This is Heat-inducible transcription repressor HrcA from Bacillus anthracis (strain A0248).